Reading from the N-terminus, the 122-residue chain is UPF0482 protein Spro_2288 (122 aa).

The first 31 residues, 1 to 31, serve as a signal peptide directing secretion; sequence MKTLSTQRLLRGMLPVAMLMLMGAWQAPALA. A disordered region spans residues 46 to 71; sequence SNSGAMSTEAARQSKQQFNDTKSLRN.

This sequence belongs to the UPF0482 family.

The sequence is that of UPF0482 protein Spro_2288 from Serratia proteamaculans (strain 568).